We begin with the raw amino-acid sequence, 1065 residues long: Probable importin-7 homolog (1065 aa).

Residues 25–98 (AEAQLQQIKV…KENLIDLLVH (74 aa)) form the Importin N-terminal domain. A disordered region spans residues 958 to 996 (ENGGDLGEDEGDNFDDQNDDDDQDSEEDLFEDEDTPDFE). Residues 963–996 (LGEDEGDNFDDQNDDDDQDSEEDLFEDEDTPDFE) are compositionally biased toward acidic residues.

This sequence belongs to the importin beta family.

The protein resides in the cytoplasm. Its subcellular location is the nucleus. May function in nuclear protein import. This Dictyostelium discoideum (Social amoeba) protein is Probable importin-7 homolog.